The primary structure comprises 374 residues: Alpha-N-acetylgalactosaminide alpha-2,6-sialyltransferase 2 (374 aa).

The Cytoplasmic portion of the chain corresponds to 1–7 (MGLPRGS). The helical; Signal-anchor for type II membrane protein transmembrane segment at 8 to 28 (FFWLLLLLTAACSGLLFALYF) threads the bilayer. At 29-374 (SAVQRYPGPA…KAGILQLYQR (346 aa)) the chain is on the lumenal side. Disulfide bonds link Cys-66/Cys-148 and Cys-151/Cys-317. N-linked (GlcNAc...) asparagine glycosylation is found at Asn-85 and Asn-130. Residue Asn-156 coordinates CMP-N-acetyl-beta-neuraminate. Asn-161 is a glycosylation site (N-linked (GlcNAc...) asparagine). CMP-N-acetyl-beta-neuraminate is bound by residues Asn-179, Ser-304, and His-336.

It belongs to the glycosyltransferase 29 family. In terms of tissue distribution, expressed in skeletal muscle, heart, kidney, placenta, lung and leukocytes.

It localises to the golgi apparatus membrane. The enzyme catalyses a beta-D-galactosyl-(1-&gt;3)-N-acetyl-alpha-D-galactosaminyl derivative + CMP-N-acetyl-beta-neuraminate = a beta-D-galactosyl-(1-&gt;3)-[N-acetyl-alpha-neuraminyl-(2-&gt;6)]-N-acetyl-alpha-D-galactosaminyl derivative + CMP + H(+). It catalyses the reaction a 3-O-[N-acetyl-alpha-D-galactosaminyl]-L-threonyl-[protein] + CMP-N-acetyl-beta-neuraminate = a 3-O-[N-acetyl-alpha-neuraminosyl-(2-&gt;6)-N-acetyl-alpha-D-galactosaminyl]-L-threonyl-[protein] + CMP + H(+). It carries out the reaction a 3-O-[N-acetyl-alpha-neuraminyl-(2-&gt;3)-beta-D-galactosyl-(1-&gt;3)-N-acetyl-alpha-D-galactosaminyl]-L-threonyl-[protein] + CMP-N-acetyl-beta-neuraminate = a 3-O-{alpha-Neu5Ac-(2-&gt;3)-beta-D-Gal-(1-&gt;3)-[alpha-Neu5Ac-(2-&gt;6)]-alpha-D-GalNAc}-L-threonyl-[protein] + CMP + H(+). It functions in the pathway protein modification; protein glycosylation. Functionally, catalyzes the transfer of N-acetylneuraminyl groups onto glycan chains in glycoproteins. Conjugates sialic acid with an alpha-2-6 linkage to N-acetylgalactosamine (GalNAc) glycan chains linked to serine or threonine in glycoproteins. Sialylates alphaGalNAc- and Galbeta1-&gt;3GalNAc-O-Ser/Thr epitopes also known as Tn and T antigens. This Homo sapiens (Human) protein is Alpha-N-acetylgalactosaminide alpha-2,6-sialyltransferase 2 (ST6GALNAC2).